A 336-amino-acid chain; its full sequence is D-alanine--D-alanine ligase (336 aa).

The region spanning 124–330 (KMWFSALGIP…FTQYLSLVIN (207 aa)) is the ATP-grasp domain. 154 to 209 (ALEKWGSIFVKAASQGSSVGCYKVDEASKVLGVLKDAFGYAPYVIVEKTIKARELE) serves as a coordination point for ATP. Positions 284, 297, and 299 each coordinate Mg(2+).

It belongs to the D-alanine--D-alanine ligase family. It depends on Mg(2+) as a cofactor. Mn(2+) is required as a cofactor.

The protein resides in the cytoplasm. The catalysed reaction is 2 D-alanine + ATP = D-alanyl-D-alanine + ADP + phosphate + H(+). The protein operates within cell wall biogenesis; peptidoglycan biosynthesis. In terms of biological role, cell wall formation. The chain is D-alanine--D-alanine ligase from Shewanella oneidensis (strain ATCC 700550 / JCM 31522 / CIP 106686 / LMG 19005 / NCIMB 14063 / MR-1).